A 104-amino-acid polypeptide reads, in one-letter code: Large ribosomal subunit protein uL24 (104 aa).

It belongs to the universal ribosomal protein uL24 family. As to quaternary structure, part of the 50S ribosomal subunit.

In terms of biological role, one of two assembly initiator proteins, it binds directly to the 5'-end of the 23S rRNA, where it nucleates assembly of the 50S subunit. Functionally, one of the proteins that surrounds the polypeptide exit tunnel on the outside of the subunit. The protein is Large ribosomal subunit protein uL24 of Nitrobacter winogradskyi (strain ATCC 25391 / DSM 10237 / CIP 104748 / NCIMB 11846 / Nb-255).